A 434-amino-acid polypeptide reads, in one-letter code: UDP-N-acetylglucosamine 1-carboxyvinyltransferase (434 aa).

Residue 22–23 participates in phosphoenolpyruvate binding; it reads KN. Position 93 (arginine 93) interacts with UDP-N-acetyl-alpha-D-glucosamine. The active-site Proton donor is cysteine 117. A 2-(S-cysteinyl)pyruvic acid O-phosphothioketal modification is found at cysteine 117. UDP-N-acetyl-alpha-D-glucosamine contacts are provided by aspartate 307 and valine 329.

Belongs to the EPSP synthase family. MurA subfamily.

It localises to the cytoplasm. The catalysed reaction is phosphoenolpyruvate + UDP-N-acetyl-alpha-D-glucosamine = UDP-N-acetyl-3-O-(1-carboxyvinyl)-alpha-D-glucosamine + phosphate. It functions in the pathway cell wall biogenesis; peptidoglycan biosynthesis. Cell wall formation. Adds enolpyruvyl to UDP-N-acetylglucosamine. The chain is UDP-N-acetylglucosamine 1-carboxyvinyltransferase from Coxiella burnetii (strain CbuG_Q212) (Coxiella burnetii (strain Q212)).